The following is a 486-amino-acid chain: ATP-dependent 6-phosphofructokinase (486 aa).

ATP contacts are provided by residues Gly-105, 171-172 (RG), and 196-199 (GDGT). Asp-197 is a Mg(2+) binding site. Residues 225-227 (TID), 270-272 (MGR), Glu-323, and 378-381 (YMIR) each bind substrate. The active-site Proton acceptor is Asp-227. Residues 484–486 (SKV) carry the Peroxisomal targeting signal motif.

It belongs to the phosphofructokinase type A (PFKA) family. PPi-dependent PFK group II subfamily. Atypical ATP-dependent clade 'X' sub-subfamily. Homotetramer. Mg(2+) is required as a cofactor.

It is found in the glycosome. The enzyme catalyses beta-D-fructose 6-phosphate + ATP = beta-D-fructose 1,6-bisphosphate + ADP + H(+). Its pathway is carbohydrate degradation; glycolysis; D-glyceraldehyde 3-phosphate and glycerone phosphate from D-glucose: step 3/4. Its activity is regulated as follows. Allosterically activated by AMP. Catalyzes the phosphorylation of D-fructose 6-phosphate to fructose 1,6-bisphosphate by ATP, the first committing step of glycolysis. This chain is ATP-dependent 6-phosphofructokinase, found in Leishmania donovani.